A 267-amino-acid chain; its full sequence is MKLALRIAYDGTAFYGFQRQPGIRTVEGELINVLTKLKIIESPEKNDFKGASRTDRGVSAFFNVVSFVPGERADLARPEVLNHNLHDLWVLGVAEVPDDFHPRFWAISKTYRYYLIDEGFELEKMVGCAKLFEGRHDFSAFARLEPGRDPVREITHISITPRHGYYVIEITGKSFLWEMVRRIVNALRFCGLSLLEPEEVGAMLSGVYEKKVPPAPPENLILWHIEYPNVEFKTDGKSLSKARRDLFERYSRALARAALFGDCLVEL.

Catalysis depends on Asp-55, which acts as the Nucleophile. Tyr-111 is a binding site for substrate.

Belongs to the tRNA pseudouridine synthase TruA family.

It catalyses the reaction uridine(38/39/40) in tRNA = pseudouridine(38/39/40) in tRNA. Its function is as follows. Formation of pseudouridine at positions 38, 39 and 40 in the anticodon stem and loop of transfer RNAs. The polypeptide is tRNA pseudouridine synthase A (Thermococcus gammatolerans (strain DSM 15229 / JCM 11827 / EJ3)).